The primary structure comprises 139 residues: MLFDAFTNGFMNDIFEFGDRSKFNRSAWLSCWGPALELRETEDTIEVDVEVPGIDKQNLKVDLHGSKLTISGERKKPEEEKAGPLIRWSERCVGAFSRTITLPQPVDEKLIHASLNNGILSIVMKKKNPEFTTRIVEIQ.

Positions Ala27–Gln139 constitute a sHSP domain.

The protein belongs to the small heat shock protein (HSP20) family.

Its subcellular location is the mitochondrion. The polypeptide is Heat shock protein homolog C338.06c (Schizosaccharomyces pombe (strain 972 / ATCC 24843) (Fission yeast)).